Here is a 216-residue protein sequence, read N- to C-terminus: Phosphoenolpyruvate guanylyltransferase (216 aa).

Positions 150, 165, and 168 each coordinate phosphoenolpyruvate.

It belongs to the CofC family.

The enzyme catalyses phosphoenolpyruvate + GTP + H(+) = enolpyruvoyl-2-diphospho-5'-guanosine + diphosphate. The protein operates within cofactor biosynthesis; coenzyme F420 biosynthesis. In terms of biological role, guanylyltransferase that catalyzes the activation of phosphoenolpyruvate (PEP) as enolpyruvoyl-2-diphospho-5'-guanosine, via the condensation of PEP with GTP. It is involved in the biosynthesis of coenzyme F420, a hydride carrier cofactor. In Mycobacterium leprae (strain Br4923), this protein is Phosphoenolpyruvate guanylyltransferase.